A 671-amino-acid polypeptide reads, in one-letter code: UvrABC system protein B (671 aa).

Positions 26–183 constitute a Helicase ATP-binding domain; the sequence is EGLENGLAHQ…RRLSELQYSR (158 aa). Position 39–46 (39–46) interacts with ATP; sequence GVTGSGKT. The short motif at 92–115 is the Beta-hairpin element; it reads YYDYYQPEAYVPSSDTFIEKDASV. Residues 431 to 593 form the Helicase C-terminal domain; the sequence is QVDDLLSEIR…IIPQGLNKKI (163 aa). Positions 631–666 constitute a UVR domain; sequence DQKIRELEAKMYTYAQNLEFEQAAELRDQVHQLRQQ.

It belongs to the UvrB family. Forms a heterotetramer with UvrA during the search for lesions. Interacts with UvrC in an incision complex.

The protein resides in the cytoplasm. Functionally, the UvrABC repair system catalyzes the recognition and processing of DNA lesions. A damage recognition complex composed of 2 UvrA and 2 UvrB subunits scans DNA for abnormalities. Upon binding of the UvrA(2)B(2) complex to a putative damaged site, the DNA wraps around one UvrB monomer. DNA wrap is dependent on ATP binding by UvrB and probably causes local melting of the DNA helix, facilitating insertion of UvrB beta-hairpin between the DNA strands. Then UvrB probes one DNA strand for the presence of a lesion. If a lesion is found the UvrA subunits dissociate and the UvrB-DNA preincision complex is formed. This complex is subsequently bound by UvrC and the second UvrB is released. If no lesion is found, the DNA wraps around the other UvrB subunit that will check the other stand for damage. The chain is UvrABC system protein B from Yersinia pestis bv. Antiqua (strain Antiqua).